The sequence spans 218 residues: Octanoyltransferase (218 aa).

Residues Gly-30–Ala-217 enclose the BPL/LPL catalytic domain. Substrate contacts are provided by residues Arg-68 to His-75, Ala-148 to Gly-150, and Gly-161 to Ala-163. Cys-179 functions as the Acyl-thioester intermediate in the catalytic mechanism.

It belongs to the LipB family.

It localises to the cytoplasm. The enzyme catalyses octanoyl-[ACP] + L-lysyl-[protein] = N(6)-octanoyl-L-lysyl-[protein] + holo-[ACP] + H(+). It functions in the pathway protein modification; protein lipoylation via endogenous pathway; protein N(6)-(lipoyl)lysine from octanoyl-[acyl-carrier-protein]: step 1/2. Catalyzes the transfer of endogenously produced octanoic acid from octanoyl-acyl-carrier-protein onto the lipoyl domains of lipoate-dependent enzymes. Lipoyl-ACP can also act as a substrate although octanoyl-ACP is likely to be the physiological substrate. This Paracoccus denitrificans (strain Pd 1222) protein is Octanoyltransferase.